The chain runs to 240 residues: Tetraspanin-1 (240 aa).

The Cytoplasmic segment spans residues 1–9 (MQCFSFIKT). The chain crosses the membrane as a helical span at residues 10–30 (IMILFNLLIFLCGAALLAVGI). The Extracellular segment spans residues 31 to 52 (WVSIDGASFLKIFGPLSSSAMQ). A helical membrane pass occupies residues 53-73 (FVNVGYFLIAAGAVVFALGFL). Residues 74–88 (GCYGAQTESKCALMT) are Cytoplasmic-facing. A helical transmembrane segment spans residues 89-109 (FFFILLLIFIAEVAAAVVALV). Topologically, residues 110–210 (YTTMAEHFLT…QQLLYDIRTN (101 aa)) are extracellular. Residue Asn-154 is glycosylated (N-linked (GlcNAc...) asparagine). The chain crosses the membrane as a helical span at residues 211–231 (AVTVGGVAAGIGGLELAAMIV). Residues 232 to 240 (SMYLYCNLQ) are Cytoplasmic-facing.

It belongs to the tetraspanin (TM4SF) family. As to quaternary structure, interacts with SLC19A2. Interacts with NTRK1/TRKA.

It localises to the lysosome membrane. Its function is as follows. Structural component of specialized membrane microdomains known as tetraspanin-enriched microdomains (TERMs), which act as platforms for receptor clustering and signaling. Participates thereby in diverse biological functions such as cell signal transduction, adhesion, migration and protein trafficking. Regulates neuronal differentiation in response to NGF by facilitating NGF-mediated activation of NTRK1/TRKA receptor tyrosine kinase and subsequent downstream signaling pathways. Plays a role in the inhibition of TNFalpha-induced apoptosis. Mechanistically, inhibits the NF-kappa-B signaling pathway by blocking phosphorylation of CHUK. Also promotes the stability of the thiamine transporter 1/SLC19A2 in intestinal epithelial cells leading to an increase of thiamine uptake process. The chain is Tetraspanin-1 (TSPAN1) from Macaca fascicularis (Crab-eating macaque).